The sequence spans 198 residues: Nuclear transcription factor Y subunit A-4 (198 aa).

The tract at residues 1-47 (MTSSVHELSDNNESHAKKERPDSQTRPQVPSGRSSESIDTNSVYSEP) is disordered. Residues 7 to 23 (ELSDNNESHAKKERPDS) show a composition bias toward basic and acidic residues. Over residues 24–44 (QTRPQVPSGRSSESIDTNSVY) the composition is skewed to polar residues. Residues 101-124 (FVNAKQYHGILRRRQSRAKLEARN) carry the Subunit association domain (SAD) motif. A DNA-binding region (NFYA/HAP2-type) is located at residues 131–156 (KPYMHESRHLHAIRRPRGCGGRFLNA). The segment at 136–198 (ESRHLHAIRR…MATSGPNGRS (63 aa)) is disordered. Over residues 156–166 (AKKENGDHKEE) the composition is skewed to basic and acidic residues.

Belongs to the NFYA/HAP2 subunit family. As to quaternary structure, heterotrimeric transcription factor composed of three components, NF-YA, NF-YB and NF-YC. NF-YB and NF-YC must interact and dimerize for NF-YA association and DNA binding. In terms of tissue distribution, expressed in stems, caulines, and senescent flowers.

The protein localises to the nucleus. In terms of biological role, stimulates the transcription of various genes by recognizing and binding to a CCAAT motif in promoters. This Arabidopsis thaliana (Mouse-ear cress) protein is Nuclear transcription factor Y subunit A-4 (NFYA4).